An 84-amino-acid chain; its full sequence is Large ribosomal subunit protein bL27 (84 aa).

Residues 1–21 (MAHKKAGGSTRNGRDSNPKYL) are disordered.

This sequence belongs to the bacterial ribosomal protein bL27 family.

The sequence is that of Large ribosomal subunit protein bL27 from Francisella tularensis subsp. holarctica (strain FTNF002-00 / FTA).